The chain runs to 296 residues: MTSKKLIVVFGATGAQGGSVARALLEDGAFAVRAVTRSPGRKEAAELRRRGAELMRADQDDERSLEEALTGAHGAFVVTNFWEHCSKEKEVAQGRRLADLSKRLGLQHVVYSGLENVKQLTKGRLEVLHFDGKGEVEEYFRAVNVPTTTIRLPFYYENFLSSFKPQKAPQGDKLLLGLPMGDTPMDGMAVEDLGPIVLSLLKSPEQYIGQVIGLSAGKLTVAEYAAAFSQQTGKTVEDSKITPEEYEKLGFPGAKELADMFRFYALKPDRNVELTMKLNPKARTFQQWLADNKAAF.

NADP(+) is bound by residues 11 to 16, 37 to 41, 58 to 59, 79 to 81, Lys-133, and 155 to 158; these read GATGAQ, RSPGR, DQ, TNF, and YYEN.

Belongs to the NmrA-type oxidoreductase family. In terms of assembly, homodimer.

Its subcellular location is the cytoplasm. It localises to the perinuclear region. The protein localises to the nucleus. Its function is as follows. Redox sensor protein. Undergoes restructuring and subcellular redistribution in response to changes in intracellular NADPH/NADP(+) levels. This Gallus gallus (Chicken) protein is NmrA-like family domain-containing protein 1 (NMRAL1).